A 394-amino-acid polypeptide reads, in one-letter code: Elongation factor Tu (394 aa).

In terms of domain architecture, tr-type G spans 10–204 (KPHVNVGTIG…ALDSYIPEPE (195 aa)). Positions 19–26 (GHVDHGKT) are G1. Position 19–26 (19–26 (GHVDHGKT)) interacts with GTP. Thr-26 lines the Mg(2+) pocket. A G2 region spans residues 60-64 (GITIN). Residues 81 to 84 (DCPG) form a G3 region. GTP is bound by residues 81–85 (DCPGH) and 136–139 (NKCD). Residues 136–139 (NKCD) form a G4 region. Residues 174–176 (SAL) form a G5 region.

Belongs to the TRAFAC class translation factor GTPase superfamily. Classic translation factor GTPase family. EF-Tu/EF-1A subfamily. As to quaternary structure, monomer.

The protein localises to the cytoplasm. It catalyses the reaction GTP + H2O = GDP + phosphate + H(+). Functionally, GTP hydrolase that promotes the GTP-dependent binding of aminoacyl-tRNA to the A-site of ribosomes during protein biosynthesis. This is Elongation factor Tu from Shewanella sp. (strain ANA-3).